The primary structure comprises 555 residues: CTP synthase (555 aa).

An amidoligase domain region spans residues 1–277; that stretch reads MPKEPETEYD…DQHVMERLNV (277 aa). Serine 26 provides a ligand contact to CTP. UTP is bound at residue serine 26. ATP is bound at residue 27 to 32; it reads GLGKGI. Tyrosine 67 is an L-glutamine binding site. Residue aspartate 84 coordinates ATP. 2 residues coordinate Mg(2+): aspartate 84 and glutamate 152. CTP is bound by residues 159–161, 198–203, and lysine 234; these read DIE and KTKPTQ. UTP-binding positions include 198-203 and lysine 234; that span reads KTKPTQ. The region spanning 307–542 is the Glutamine amidotransferase type-1 domain; the sequence is LVGKYDLEDA…LKSVDSTLDA (236 aa). Glycine 364 contributes to the L-glutamine binding site. The active-site Nucleophile; for glutamine hydrolysis is cysteine 391. Residues 392–395, glutamate 415, and arginine 472 each bind L-glutamine; that span reads LGFQ. Residues histidine 515 and glutamate 517 contribute to the active site.

The protein belongs to the CTP synthase family. As to quaternary structure, homotetramer.

It carries out the reaction UTP + L-glutamine + ATP + H2O = CTP + L-glutamate + ADP + phosphate + 2 H(+). The enzyme catalyses L-glutamine + H2O = L-glutamate + NH4(+). The catalysed reaction is UTP + NH4(+) + ATP = CTP + ADP + phosphate + 2 H(+). The protein operates within pyrimidine metabolism; CTP biosynthesis via de novo pathway; CTP from UDP: step 2/2. Allosterically activated by GTP, when glutamine is the substrate; GTP has no effect on the reaction when ammonia is the substrate. The allosteric effector GTP functions by stabilizing the protein conformation that binds the tetrahedral intermediate(s) formed during glutamine hydrolysis. Inhibited by the product CTP, via allosteric rather than competitive inhibition. Catalyzes the ATP-dependent amination of UTP to CTP with either L-glutamine or ammonia as the source of nitrogen. Regulates intracellular CTP levels through interactions with the four ribonucleotide triphosphates. This Haloquadratum walsbyi (strain DSM 16790 / HBSQ001) protein is CTP synthase.